The chain runs to 432 residues: Glutamate-1-semialdehyde 2,1-aminomutase (432 aa).

An N6-(pyridoxal phosphate)lysine modification is found at lysine 265.

This sequence belongs to the class-III pyridoxal-phosphate-dependent aminotransferase family. HemL subfamily. Homodimer. Requires pyridoxal 5'-phosphate as cofactor.

The protein localises to the cytoplasm. The enzyme catalyses (S)-4-amino-5-oxopentanoate = 5-aminolevulinate. Its pathway is porphyrin-containing compound metabolism; protoporphyrin-IX biosynthesis; 5-aminolevulinate from L-glutamyl-tRNA(Glu): step 2/2. This chain is Glutamate-1-semialdehyde 2,1-aminomutase, found in Histophilus somni (strain 2336) (Haemophilus somnus).